We begin with the raw amino-acid sequence, 511 residues long: Probable cytochrome P450 4ac2 (511 aa).

Heme is bound by residues Glu-318 and Cys-455.

The protein belongs to the cytochrome P450 family. Heme serves as cofactor.

It is found in the endoplasmic reticulum membrane. The protein resides in the microsome membrane. In terms of biological role, may be involved in the metabolism of insect hormones and in the breakdown of synthetic insecticides. The protein is Probable cytochrome P450 4ac2 (Cyp4ac2) of Drosophila melanogaster (Fruit fly).